Here is a 165-residue protein sequence, read N- to C-terminus: MWATYVFIAVSLACANGYSSGAPESVCQDMVPKHPVPPQSTPPPYTITTSTKTVKAGTPMEVVITGKKPTDKMRGLLLQAREGTKIVGKFTLAPNDPFAQLLNCGEPGNAITHKKHDEKNDKQTVAFTWTPPKDFVGEIKFRATIALNGAVFWVGVESGPVKVIS.

The signal sequence occupies residues 1–17 (MWATYVFIAVSLACANG). Positions 18-165 (YSSGAPESVC…VESGPVKVIS (148 aa)) constitute a Reelin domain. The cysteines at positions 27 and 104 are disulfide-linked.

Belongs to the insect defense protein family.

It localises to the secreted. In terms of biological role, as this protein is expressed upon bacterial infection, it may have antimicrobial activity. The polypeptide is Putative defense protein Hdd11 (Hyphantria cunea (Fall webworm moth)).